The following is a 497-amino-acid chain: Pentatricopeptide repeat-containing protein At2g36240 (497 aa).

PPR repeat units follow at residues 156-186 (LEPIFRSAIDAYCRARKMDYALLAFDTMKRL), 192-226 (NVGVYNTVVNGYVKSGDMDKALRFYQRMGKERAKP), 227-261 (DVCTFNILINGYCRSSKFDLALDLFREMKEKGCEP), 262-296 (NVVSFNTLIRGFLSSGKIEEGVKMAYEMIELGCRF), 297-331 (SEATCEILVDGLCREGRVDDACGLVLDLLNKRVLP), 332-366 (SEFDYGSLVEKLCGENKAVRAMEMMEELWKKGQTP), 367-401 (CFIACTTLVEGLRKSGRTEKASGFMEKMMNAGILP), 402-436 (DSVTFNLLLRDLCSSDHSTDANRLRLLASSKGYEP), and 437-471 (DETTYHVLVSGFTKEGRRKEGEVLVNEMLDKDMLP).

It belongs to the PPR family. P subfamily.

The chain is Pentatricopeptide repeat-containing protein At2g36240 from Arabidopsis thaliana (Mouse-ear cress).